Reading from the N-terminus, the 584-residue chain is Arginine--tRNA ligase (584 aa).

The 'HIGH' region signature appears at 126 to 136 (PNIAKEMHVGH).

The protein belongs to the class-I aminoacyl-tRNA synthetase family. Monomer.

The protein resides in the cytoplasm. The catalysed reaction is tRNA(Arg) + L-arginine + ATP = L-arginyl-tRNA(Arg) + AMP + diphosphate. The protein is Arginine--tRNA ligase of Nostoc punctiforme (strain ATCC 29133 / PCC 73102).